Here is a 31-residue protein sequence, read N- to C-terminus: Conotoxin (31 aa).

Belongs to the conotoxin S superfamily. Contains 5 disulfide bonds. Expressed by the venom duct.

It localises to the secreted. The protein is Conotoxin of Conus striatus (Striated cone).